Reading from the N-terminus, the 398-residue chain is T-box transcription factor TBX1 (398 aa).

Residues 23–72 are disordered; the sequence is AAGGFPGAASPGADPYGPREPPPPPPRYDPCAAAAPGAPGPPPPPHAYPF. A compositionally biased stretch (low complexity) spans 29 to 38; that stretch reads GAASPGADPY. Pro residues-rich tracts occupy residues 40–50 and 60–69; these read PREPPPPPPRY and APGPPPPPHA. Residues 119–297 constitute a DNA-binding region (T-box); that stretch reads LWDEFNQLGT…SNPFAKGFRD (179 aa).

As to quaternary structure, binds DNA as a dimer. Interacts with DSCR6. Interacts with NKX2-5.

Its subcellular location is the nucleus. Its function is as follows. Transcription factor that plays a key role in cardiovascular development by promoting pharyngeal arch segmentation during embryonic development. Also involved in craniofacial muscle development. Together with NKX2-5, acts as a regulator of asymmetric cardiac morphogenesis by promoting expression of PITX2. Acts upstream of TBX1 for the formation of the thymus and parathyroid glands from the third pharyngeal pouch. Required for hair follicle stem cell self-renewal. Binds to the palindromic T site 5'-TTCACACCTAGGTGTGAA-3' DNA sequence. The chain is T-box transcription factor TBX1 from Homo sapiens (Human).